A 273-amino-acid polypeptide reads, in one-letter code: Large ribosomal subunit protein uL2cz/uL2cy (273 aa).

Disordered stretches follow at residues 1–20 (MAKH…TIDR) and 225–273 (PVDH…RRRK).

This sequence belongs to the universal ribosomal protein uL2 family. As to quaternary structure, part of the 50S ribosomal subunit.

It is found in the plastid. Its subcellular location is the chloroplast. The polypeptide is Large ribosomal subunit protein uL2cz/uL2cy (rpl2-A) (Oryza nivara (Indian wild rice)).